The primary structure comprises 313 residues: tRNA dimethylallyltransferase (313 aa).

Residue 10–17 (GPTAVGKS) participates in ATP binding. 12–17 (TAVGKS) is a binding site for substrate. The interaction with substrate tRNA stretch occupies residues 35–38 (DSTQ).

This sequence belongs to the IPP transferase family. Monomer. Mg(2+) is required as a cofactor.

The enzyme catalyses adenosine(37) in tRNA + dimethylallyl diphosphate = N(6)-dimethylallyladenosine(37) in tRNA + diphosphate. In terms of biological role, catalyzes the transfer of a dimethylallyl group onto the adenine at position 37 in tRNAs that read codons beginning with uridine, leading to the formation of N6-(dimethylallyl)adenosine (i(6)A). In Oceanobacillus iheyensis (strain DSM 14371 / CIP 107618 / JCM 11309 / KCTC 3954 / HTE831), this protein is tRNA dimethylallyltransferase.